The following is a 454-amino-acid chain: GTPase Der (454 aa).

EngA-type G domains follow at residues 3-167 and 181-354; these read PVIT…GIAE and MKIA…AAAM. Residues 9–16, 56–60, 119–122, 187–194, 234–238, and 299–302 each bind GTP; these read GRPNVGKS, DTGGF, NKTE, DTAGL, and NKWD. One can recognise a KH-like domain in the interval 355–439; that stretch reads AKLPTPRLTR…PLRIQMNTAK (85 aa).

This sequence belongs to the TRAFAC class TrmE-Era-EngA-EngB-Septin-like GTPase superfamily. EngA (Der) GTPase family. Associates with the 50S ribosomal subunit.

Its function is as follows. GTPase that plays an essential role in the late steps of ribosome biogenesis. This Polynucleobacter asymbioticus (strain DSM 18221 / CIP 109841 / QLW-P1DMWA-1) (Polynucleobacter necessarius subsp. asymbioticus) protein is GTPase Der.